A 920-amino-acid polypeptide reads, in one-letter code: Neurofibromin-A (920 aa).

The region spanning asparagine 63–isoleucine 291 is the Ras-GAP domain. Disordered regions lie at residues lysine 344–alanine 405 and leucine 477–methionine 508. The segment covering leucine 346–lysine 369 has biased composition (polar residues). A compositionally biased stretch (low complexity) spans serine 370 to alanine 405. Positions proline 498–serine 507 are enriched in polar residues. The CRAL-TRIO domain occupies phenylalanine 512 to tyrosine 673.

Its function is as follows. Regulator of the GTPase activity of Ras, mainly RasG and RasB. The chain is Neurofibromin-A (nfaA) from Dictyostelium discoideum (Social amoeba).